A 215-amino-acid chain; its full sequence is MSKIYDWFEERLEIQAIADDISSKYVPPHVNIFYCLGGIVFVSFLIQVATGFAMTFYYRPTVAEAFTSVEYIMTDVNFGWLIRSIHRWSVSMMVLMMILHVFRVYLTGGFKKPRELTWVTGVILGVLTVSFGVTGYSLPWDQIGYWAVKIVTGVPDAVPVVGASIVELLRGGVSVGQGTLTRFYSLHTFVLPLLTAVFMLMHFLMIRKQGISGPL.

Residues 32–52 form a helical membrane-spanning segment; sequence IFYCLGGIVFVSFLIQVATGF. A heme c-binding site is contributed by Cys-35. 2 residues coordinate heme b: His-86 and His-100. The next 3 membrane-spanning stretches (helical) occupy residues 90–110, 116–136, and 186–206; these read VSMM…TGGF, LTWV…VTGY, and LHTF…FLMI. Residues His-187 and His-202 each coordinate heme b.

Belongs to the cytochrome b family. PetB subfamily. The 4 large subunits of the cytochrome b6-f complex are cytochrome b6, subunit IV (17 kDa polypeptide, PetD), cytochrome f and the Rieske protein, while the 4 small subunits are PetG, PetL, PetM and PetN. The complex functions as a dimer. Heme b is required as a cofactor. The cofactor is heme c.

It localises to the plastid. The protein localises to the chloroplast thylakoid membrane. Its function is as follows. Component of the cytochrome b6-f complex, which mediates electron transfer between photosystem II (PSII) and photosystem I (PSI), cyclic electron flow around PSI, and state transitions. In Pyropia yezoensis (Susabi-nori), this protein is Cytochrome b6.